Consider the following 31-residue polypeptide: Malate dehydrogenase, mitochondrial (31 aa).

NAD(+) contacts are provided by residues 9–19 (GIGQPLSLLMK) and 20–31 (DDLFNINAGIVK).

The protein belongs to the LDH/MDH superfamily. MDH type 1 family. Homodimer.

The protein localises to the mitochondrion matrix. The enzyme catalyses (S)-malate + NAD(+) = oxaloacetate + NADH + H(+). This Imperata cylindrica (Cogon grass) protein is Malate dehydrogenase, mitochondrial.